Consider the following 1320-residue polypeptide: Centrosomin (1320 aa).

The disordered stretch occupies residues 20–41; sequence ASFDVPRPPGGGNSPLPSQGRS. Residues 97 to 516 are a coiled coil; sequence RKTVDVKMEL…SSQEKEIKKL (420 aa). Basic and acidic residues predominate over residues 517-530; that stretch reads NQENEQSANKENDC. The segment at 517–554 is disordered; sequence NQENEQSANKENDCAKTVISPSSSGRSMSDNEASSQEM. Polar residues predominate over residues 535–554; the sequence is ISPSSSGRSMSDNEASSQEM. Residue Ser545 is modified to Phosphoserine. Coiled coils occupy residues 626 to 654 and 712 to 983; these read EADLQQSFTEAEYMRALERNKLLQRKVDV and NSLL…LKLA. Positions 644–656 match the Nuclear localization signal motif; sequence RNKLLQRKVDVLF. The residue at position 782 (Thr782) is a Phosphothreonine. Ser785 carries the post-translational modification Phosphoserine. The span at 810 to 823 shows a compositional bias: basic and acidic residues; sequence KKELEKRRSSEGQR. 2 disordered regions span residues 810-849 and 863-893; these read KKELEKRRSSEGQRKERRSLPLPSQQFDNQSESEAWSEPD and SNSLAAPEQAISESESEGRTCATRQDRNRNS. Polar residues predominate over residues 831-843; the sequence is LPSQQFDNQSESE. 7 positions are modified to phosphoserine: Ser874, Ser876, Ser878, Ser1191, Ser1234, Ser1237, and Ser1239. Positions 1220–1249 are disordered; that stretch reads VEMKTEGSASPKAKSEESTSPDSKSNVATG. The segment covering 1237–1247 has biased composition (polar residues); that stretch reads STSPDSKSNVA.

As to quaternary structure, monomer. Developing visceral mesoderm of the midgut, the central and peripheral nervous system, and developing gonads. Isoform J: Expressed in ovaries, testis and embryos. Isoform A: Expressed in testis only.

It is found in the cytoplasm. Its subcellular location is the cytoskeleton. The protein localises to the microtubule organizing center. It localises to the centrosome. The protein resides in the flagellum basal body. It is found in the perinuclear region. Functionally, core component of the centrosome throughout spermatogenesis. May participate in mitotic spindle assembly and the mechanics of morphogenesis through an interaction with microtubules, either directly or indirectly. Is a target of several homeotic genes. The chain is Centrosomin (cnn) from Drosophila melanogaster (Fruit fly).